A 501-amino-acid polypeptide reads, in one-letter code: Cytochrome P450 6j1 (501 aa).

Heme is bound at residue Cys-444.

This sequence belongs to the cytochrome P450 family. The cofactor is heme.

It is found in the endoplasmic reticulum membrane. It localises to the microsome membrane. In Blattella germanica (German cockroach), this protein is Cytochrome P450 6j1 (CYP6J1).